We begin with the raw amino-acid sequence, 361 residues long: S-adenosylmethionine:tRNA ribosyltransferase-isomerase (361 aa).

Belongs to the QueA family. Monomer.

It is found in the cytoplasm. The catalysed reaction is 7-aminomethyl-7-carbaguanosine(34) in tRNA + S-adenosyl-L-methionine = epoxyqueuosine(34) in tRNA + adenine + L-methionine + 2 H(+). It functions in the pathway tRNA modification; tRNA-queuosine biosynthesis. In terms of biological role, transfers and isomerizes the ribose moiety from AdoMet to the 7-aminomethyl group of 7-deazaguanine (preQ1-tRNA) to give epoxyqueuosine (oQ-tRNA). The protein is S-adenosylmethionine:tRNA ribosyltransferase-isomerase of Afipia carboxidovorans (strain ATCC 49405 / DSM 1227 / KCTC 32145 / OM5) (Oligotropha carboxidovorans).